We begin with the raw amino-acid sequence, 297 residues long: Transcriptional regulator protein Pur-beta (297 aa).

Disordered regions lie at residues 1 to 26 (MADGDSGSERGGSSGGLQHFQREQET) and 275 to 297 (QERHRDKMYERREESEGEDVDDD). Alanine 2 bears the N-acetylalanine mark. The segment at 23–246 (EQETQELASK…LRVSEVKPSY (224 aa)) is DNA-binding. Basic and acidic residues predominate over residues 275 to 288 (QERHRDKMYERREE).

The protein belongs to the PUR DNA-binding protein family.

Its subcellular location is the nucleus. Transcriptional regulator which can act as an activator or a repressor. In Danio rerio (Zebrafish), this protein is Transcriptional regulator protein Pur-beta (purb).